Here is a 448-residue protein sequence, read N- to C-terminus: Probable glycine dehydrogenase (decarboxylating) subunit 1 (448 aa).

This sequence belongs to the GcvP family. N-terminal subunit subfamily. In terms of assembly, the glycine cleavage system is composed of four proteins: P, T, L and H. In this organism, the P 'protein' is a heterodimer of two subunits.

It carries out the reaction N(6)-[(R)-lipoyl]-L-lysyl-[glycine-cleavage complex H protein] + glycine + H(+) = N(6)-[(R)-S(8)-aminomethyldihydrolipoyl]-L-lysyl-[glycine-cleavage complex H protein] + CO2. Functionally, the glycine cleavage system catalyzes the degradation of glycine. The P protein binds the alpha-amino group of glycine through its pyridoxal phosphate cofactor; CO(2) is released and the remaining methylamine moiety is then transferred to the lipoamide cofactor of the H protein. This Lysinibacillus sphaericus (strain C3-41) protein is Probable glycine dehydrogenase (decarboxylating) subunit 1.